Here is a 176-residue protein sequence, read N- to C-terminus: Large ribosomal subunit protein uL10 (176 aa).

This sequence belongs to the universal ribosomal protein uL10 family. As to quaternary structure, part of the ribosomal stalk of the 50S ribosomal subunit. The N-terminus interacts with L11 and the large rRNA to form the base of the stalk. The C-terminus forms an elongated spine to which L12 dimers bind in a sequential fashion forming a multimeric L10(L12)X complex.

In terms of biological role, forms part of the ribosomal stalk, playing a central role in the interaction of the ribosome with GTP-bound translation factors. This is Large ribosomal subunit protein uL10 from Leuconostoc citreum (strain KM20).